Consider the following 460-residue polypeptide: MFRRPDDDDDDYSGRKVIKPKPIAEKYAKKLGSEFSTGKTFVTGSDKSQKDFYGSQQVRNDVMKSSDSGGAPLTEDEKNKLSAKILKAEMKGDTDLVKKLKRKLESGISGDDEPPKSKSKEVTMMRRDREGNILPASSRRSDSDRHGEGSSRMRREYEKSQDLDSMVREEKTGTAGDQLRLFERSLIKSSKIRRHDDESVDDIAEMQKGKKKSDEKDKKRKEKESIKEHKRIERSFDDCSRCIDSSRLKKHNIIAVGINTYLAVVEWDGLDDEHLIIVPTQHCSSTIQLDENVWDEMRLWRKGLVAVWKSQNRDCIFFEMSRHVDSNPHVFIECVPVEQEIGDMASIYFKKAINECEGEYMDNKKLIETKDLRRQIPKGFSYFAVDFGLSNGFAHVIESHDHFPSTFATEIIAGMLDLPPKKWRKRETDEMSKQKSRAENFKKLWEPVDWTKRLKNDSTK.

Disordered stretches follow at residues 38 to 78 (GKTF…EDEK), 103 to 175 (KLES…TGTA), and 193 to 227 (RRHDDESVDDIAEMQKGKKKSDEKDKKRKEKESIK). A compositionally biased stretch (polar residues) spans 54 to 68 (GSQQVRNDVMKSSDS). A coiled-coil region spans residues 84–106 (KILKAEMKGDTDLVKKLKRKLES). 3 stretches are compositionally biased toward basic and acidic residues: residues 113–131 (EPPKSKSKEVTMMRRDREG), 139–172 (RRSDSDRHGEGSSRMRREYEKSQDLDSMVREEKT), and 205–227 (EMQKGKKKSDEKDKKRKEKESIK). Residues 210–231 (KKKSDEKDKKRKEKESIKEHKR) are a coiled coil.

This sequence belongs to the CWF19 family.

The sequence is that of CWF19-like protein 2 homolog from Caenorhabditis elegans.